A 313-amino-acid chain; its full sequence is Fucose-specific lectin (313 aa).

Tandem repeats lie at residues 5–57, 58–109, 110–162, 163–208, 209–260, and 261–304. The interval 5–304 is 6 X approximate tandem repeats; it reads FLYTSKIAAI…SGKGWSIGAV (300 aa). Residues Arg-25, Glu-37, Arg-78, Glu-90, Trp-98, Gln-102, Arg-132, Glu-147, and Trp-154 each contribute to the beta-L-fucose site. Arg-78 and Glu-90 together coordinate alpha-L-fucose. Gln-102 serves as a coordination point for alpha-L-fucose. Alpha-L-fucose contacts are provided by Trp-154, Arg-180, and Glu-192. Trp-200 serves as a coordination point for beta-L-fucose. Position 204 (Gly-204) interacts with alpha-L-fucose. The beta-L-fucose site is built by Arg-227 and Glu-239. Trp-246 provides a ligand contact to alpha-L-fucose. A beta-L-fucose-binding site is contributed by Trp-299.

The protein belongs to the fungal fucose-specific lectin family. In terms of assembly, forms homodimers. The two AAL monomers are associated via interactions between N-terminal and C-terminal peptides. Tyr-7 interacts via aromatic ring stacking with its counterpart on the other monomer, whereas Ser-284 interacts via hydrogen bonding with Asp-264 on the other monomer.

Its function is as follows. Lectin that specifically binds to L-fucose. Has strongest preference for the alpha-1,6-fucosylated chain (core fucose) on glycoproteins among alpha-1,2-, alpha-1,3-, alpha-1,4-, and alpha-1,6-fucosylated chains. Might play a role in the differentiation of the fruiting body. Exhibits antifungal activity against Mucor racemosus and thus could act as an antifungal protein in natural ecosystems. This Aleuria aurantia (Orange peel mushroom) protein is Fucose-specific lectin.